The primary structure comprises 251 residues: Hydroxyacylglutathione hydrolase (251 aa).

Residues H53, H55, D57, H58, H110, D127, and H165 each contribute to the Zn(2+) site.

The protein belongs to the metallo-beta-lactamase superfamily. Glyoxalase II family. As to quaternary structure, monomer. Zn(2+) serves as cofactor.

It catalyses the reaction an S-(2-hydroxyacyl)glutathione + H2O = a 2-hydroxy carboxylate + glutathione + H(+). It functions in the pathway secondary metabolite metabolism; methylglyoxal degradation; (R)-lactate from methylglyoxal: step 2/2. In terms of biological role, thiolesterase that catalyzes the hydrolysis of S-D-lactoyl-glutathione to form glutathione and D-lactic acid. The protein is Hydroxyacylglutathione hydrolase of Escherichia coli O6:H1 (strain CFT073 / ATCC 700928 / UPEC).